Reading from the N-terminus, the 506-residue chain is Subtilisin-like serine protease Cur l 4.0101 (506 aa).

Residues 1 to 15 (MKYSLIAALPALAAA) form the signal peptide. A propeptide spans 16–135 (SPTFSTETIH…IERDSEVRIL (120 aa)) (removed in mature form). An Inhibitor I9 domain is found at 43-134 (SYMVVFKKHV…YIERDSEVRI (92 aa)). The segment at 59–79 (HDWVQSVHSKNTQERMELRKR) is disordered. Basic and acidic residues predominate over residues 69–79 (NTQERMELRKR). One can recognise a Peptidase S8 domain in the interval 147 to 453 (PWGLARISHR…GGSSNYTDII (307 aa)). Catalysis depends on charge relay system residues Asp-183 and His-215. Residues Asn-245 and Asn-285 are each glycosylated (N-linked (GlcNAc...) asparagine). Catalysis depends on Ser-381, which acts as the Charge relay system. N-linked (GlcNAc...) asparagine glycosylation occurs at Asn-448. Residues 459-506 (TVKKAASKEEEKESEFRITIPSLSELEDDFEKAKESAGRKAHHVGGKL) constitute a propeptide, removed in mature form.

This sequence belongs to the peptidase S8 family.

Functionally, serine protease. This Cochliobolus lunatus (Filamentous fungus) protein is Subtilisin-like serine protease Cur l 4.0101.